Reading from the N-terminus, the 520-residue chain is GMP synthase [glutamine-hydrolyzing] (520 aa).

The Glutamine amidotransferase type-1 domain maps to 9–202 (KILILDFGSQ…VRKICGCSGQ (194 aa)). The active-site Nucleophile is Cys-86. Active-site residues include His-176 and Glu-178. Positions 203-395 (WTPGHIIDDA…LGLPHQMVWR (193 aa)) constitute a GMPS ATP-PPase domain. 230 to 236 (SGGVDSS) is an ATP binding site.

As to quaternary structure, homodimer.

It catalyses the reaction XMP + L-glutamine + ATP + H2O = GMP + L-glutamate + AMP + diphosphate + 2 H(+). The protein operates within purine metabolism; GMP biosynthesis; GMP from XMP (L-Gln route): step 1/1. Its function is as follows. Catalyzes the synthesis of GMP from XMP. This chain is GMP synthase [glutamine-hydrolyzing], found in Geobacter metallireducens (strain ATCC 53774 / DSM 7210 / GS-15).